We begin with the raw amino-acid sequence, 86 residues long: U15-lycotoxin-Ls1c (86 aa).

The N-terminal stretch at methionine 1–serine 20 is a signal peptide. Positions aspartate 21–threonine 66 constitute a WAP domain. Disulfide bonds link cysteine 24-cysteine 54, cysteine 32-cysteine 58, cysteine 41-cysteine 53, cysteine 42-cysteine 80, and cysteine 47-cysteine 62.

The protein belongs to the venom protein 11 family. 01 (wap-1) subfamily. In terms of processing, contains 5 disulfide bonds. In terms of tissue distribution, expressed by the venom gland.

It is found in the secreted. Has antibacterial activity. The protein is U15-lycotoxin-Ls1c of Lycosa singoriensis (Wolf spider).